Here is a 145-residue protein sequence, read N- to C-terminus: WGATVITNLMSAIPWIGQDIVEFIWGGFSVNNATLNRFFALHFLLPFVLAALALMHLIAMHDTVGSGNPLGISGNYDRLPFAPYFIFKDLVTIFIFFIVLSIFVFFMPNALGDSENYVMANPMQTPPAIVPEWYLLPFYAILRSI.

A helical transmembrane segment spans residues 38-58; it reads FFALHFLLPFVLAALALMHLI. The heme b site is built by His-42 and His-56. Position 61 (His-61) interacts with a ubiquinone. A helical membrane pass occupies residues 85-105; sequence FIFKDLVTIFIFFIVLSIFVF.

The protein belongs to the cytochrome b family. As to quaternary structure, fungal cytochrome b-c1 complex contains 10 subunits; 3 respiratory subunits, 2 core proteins and 5 low-molecular weight proteins. Cytochrome b-c1 complex is a homodimer. The cofactor is heme b.

It localises to the mitochondrion inner membrane. In terms of biological role, component of the ubiquinol-cytochrome c reductase complex (complex III or cytochrome b-c1 complex) that is part of the mitochondrial respiratory chain. The b-c1 complex mediates electron transfer from ubiquinol to cytochrome c. Contributes to the generation of a proton gradient across the mitochondrial membrane that is then used for ATP synthesis. This is Cytochrome b (cob) from Aspergillus flavus.